A 178-amino-acid chain; its full sequence is UPF0114 protein HPSH_00970 (178 aa).

Transmembrane regions (helical) follow at residues 15–35, 54–74, 102–122, and 145–165; these read WLLA…GYVF, LVLS…VLMV, FNAL…IFLL, and PIFW…LAAV.

It belongs to the UPF0114 family.

The protein resides in the cell membrane. This is UPF0114 protein HPSH_00970 from Helicobacter pylori (strain Shi470).